The primary structure comprises 417 residues: Tyrosine--tRNA ligase (417 aa).

Tyrosine 39 lines the L-tyrosine pocket. The 'HIGH' region motif lies at 44-53 (PTASSLHVGH). Tyrosine 176 and glutamine 180 together coordinate L-tyrosine. Residues 236-240 (KMGKS) carry the 'KMSKS' region motif. ATP is bound at residue lysine 239. The S4 RNA-binding domain maps to 350-416 (VGVLSLIVRA…GKKKHVLVRP (67 aa)).

The protein belongs to the class-I aminoacyl-tRNA synthetase family. TyrS type 1 subfamily. Homodimer.

Its subcellular location is the cytoplasm. The catalysed reaction is tRNA(Tyr) + L-tyrosine + ATP = L-tyrosyl-tRNA(Tyr) + AMP + diphosphate + H(+). Catalyzes the attachment of tyrosine to tRNA(Tyr) in a two-step reaction: tyrosine is first activated by ATP to form Tyr-AMP and then transferred to the acceptor end of tRNA(Tyr). The chain is Tyrosine--tRNA ligase from Agrobacterium fabrum (strain C58 / ATCC 33970) (Agrobacterium tumefaciens (strain C58)).